We begin with the raw amino-acid sequence, 213 residues long: Protein arginine N-methyltransferase SFM1 (213 aa).

Phosphoserine occurs at positions 204 and 207.

The protein belongs to the class IV-like SAM-binding methyltransferase superfamily. Protein arginine N-methyltransferase SFM1 family.

It is found in the cytoplasm. S-adenosyl-L-methionine-dependent protein-arginine N-methyltransferase that monomethylates ribosomal protein S3 (RPS3) at 'Arg-146'. This chain is Protein arginine N-methyltransferase SFM1, found in Saccharomyces cerevisiae (strain ATCC 204508 / S288c) (Baker's yeast).